We begin with the raw amino-acid sequence, 177 residues long: Large ribosomal subunit protein uL6 (177 aa).

It belongs to the universal ribosomal protein uL6 family. In terms of assembly, part of the 50S ribosomal subunit.

This protein binds to the 23S rRNA, and is important in its secondary structure. It is located near the subunit interface in the base of the L7/L12 stalk, and near the tRNA binding site of the peptidyltransferase center. The chain is Large ribosomal subunit protein uL6 from Erythrobacter litoralis (strain HTCC2594).